Here is a 143-residue protein sequence, read N- to C-terminus: Large ribosomal subunit protein uL11 (143 aa).

It belongs to the universal ribosomal protein uL11 family. In terms of assembly, part of the ribosomal stalk of the 50S ribosomal subunit. Interacts with L10 and the large rRNA to form the base of the stalk. L10 forms an elongated spine to which L12 dimers bind in a sequential fashion forming a multimeric L10(L12)X complex. One or more lysine residues are methylated.

Its function is as follows. Forms part of the ribosomal stalk which helps the ribosome interact with GTP-bound translation factors. This is Large ribosomal subunit protein uL11 from Halorhodospira halophila (strain DSM 244 / SL1) (Ectothiorhodospira halophila (strain DSM 244 / SL1)).